Here is a 578-residue protein sequence, read N- to C-terminus: Probable arginine--tRNA ligase, mitochondrial (578 aa).

A mitochondrion-targeting transit peptide spans 1–16 (MACGFRRSIASQLSRV). Residues 133-135 (SPN), His-144, Tyr-322, Asp-326, and Gln-350 contribute to the L-arginine site. Positions 133–144 (SPNVAKKFHVGH) match the 'HIGH' region motif. N6-acetyllysine is present on Lys-568.

It belongs to the class-I aminoacyl-tRNA synthetase family.

It is found in the mitochondrion membrane. The catalysed reaction is tRNA(Arg) + L-arginine + ATP = L-arginyl-tRNA(Arg) + AMP + diphosphate. Functionally, catalyzes the attachment of arginine to tRNA(Arg) in a two-step reaction: arginine is first activated by ATP to form Arg-AMP and then transferred to the acceptor end of tRNA(Arg). The protein is Probable arginine--tRNA ligase, mitochondrial (RARS2) of Bos taurus (Bovine).